The sequence spans 386 residues: Bifunctional enzyme IspD/IspF (386 aa).

Residues 1-225 (MYNFVTLSIL…SCLSAPSSDT (225 aa)) form a 2-C-methyl-D-erythritol 4-phosphate cytidylyltransferase region. A 2-C-methyl-D-erythritol 2,4-cyclodiphosphate synthase region spans residues 226–386 (LSGVGFDVHA…NLKYFDWTKI (161 aa)). A divalent metal cation is bound by residues Asp232 and His234. 4-CDP-2-C-methyl-D-erythritol 2-phosphate-binding positions include 232-234 (DVH) and 258-259 (HS). Residue His266 coordinates a divalent metal cation. 4-CDP-2-C-methyl-D-erythritol 2-phosphate is bound by residues 280–282 (DIG), 285–289 (FPDND), 356–359 (TTTE), Phe363, and Arg366.

This sequence in the N-terminal section; belongs to the IspD/TarI cytidylyltransferase family. IspD subfamily. The protein in the C-terminal section; belongs to the IspF family. A divalent metal cation is required as a cofactor.

The enzyme catalyses 2-C-methyl-D-erythritol 4-phosphate + CTP + H(+) = 4-CDP-2-C-methyl-D-erythritol + diphosphate. It catalyses the reaction 4-CDP-2-C-methyl-D-erythritol 2-phosphate = 2-C-methyl-D-erythritol 2,4-cyclic diphosphate + CMP. Its pathway is isoprenoid biosynthesis; isopentenyl diphosphate biosynthesis via DXP pathway; isopentenyl diphosphate from 1-deoxy-D-xylulose 5-phosphate: step 2/6. It functions in the pathway isoprenoid biosynthesis; isopentenyl diphosphate biosynthesis via DXP pathway; isopentenyl diphosphate from 1-deoxy-D-xylulose 5-phosphate: step 4/6. Its function is as follows. Bifunctional enzyme that catalyzes the formation of 4-diphosphocytidyl-2-C-methyl-D-erythritol from CTP and 2-C-methyl-D-erythritol 4-phosphate (MEP) (IspD), and catalyzes the conversion of 4-diphosphocytidyl-2-C-methyl-D-erythritol 2-phosphate (CDP-ME2P) to 2-C-methyl-D-erythritol 2,4-cyclodiphosphate (ME-CPP) with a corresponding release of cytidine 5-monophosphate (CMP) (IspF). The polypeptide is Bifunctional enzyme IspD/IspF (Sulfurimonas denitrificans (strain ATCC 33889 / DSM 1251) (Thiomicrospira denitrificans (strain ATCC 33889 / DSM 1251))).